The chain runs to 305 residues: Ribonuclease Z (305 aa).

Positions 61, 63, 65, 66, 138, 208, and 266 each coordinate Zn(2+). The active-site Proton acceptor is Asp-65.

Belongs to the RNase Z family. In terms of assembly, homodimer. Requires Zn(2+) as cofactor.

It catalyses the reaction Endonucleolytic cleavage of RNA, removing extra 3' nucleotides from tRNA precursor, generating 3' termini of tRNAs. A 3'-hydroxy group is left at the tRNA terminus and a 5'-phosphoryl group is left at the trailer molecule.. In terms of biological role, zinc phosphodiesterase, which displays some tRNA 3'-processing endonuclease activity. Probably involved in tRNA maturation, by removing a 3'-trailer from precursor tRNA. The polypeptide is Ribonuclease Z (Methanosarcina mazei (strain ATCC BAA-159 / DSM 3647 / Goe1 / Go1 / JCM 11833 / OCM 88) (Methanosarcina frisia)).